The chain runs to 398 residues: S-adenosylmethionine synthase (398 aa).

Residue H17 participates in ATP binding. D19 is a binding site for Mg(2+). Position 45 (E45) interacts with K(+). Residues E58 and Q101 each contribute to the L-methionine site. The tract at residues 101 to 111 is flexible loop; sequence QSPDIAQGVDK. ATP-binding positions include 176 to 178, 243 to 244, D252, 258 to 259, and K279; these read DGK, RF, and RK. Position 252 (D252) interacts with L-methionine. K283 is an L-methionine binding site.

The protein belongs to the AdoMet synthase family. In terms of assembly, homotetramer; dimer of dimers. The cofactor is Mg(2+). K(+) serves as cofactor.

The protein localises to the cytoplasm. It carries out the reaction L-methionine + ATP + H2O = S-adenosyl-L-methionine + phosphate + diphosphate. The protein operates within amino-acid biosynthesis; S-adenosyl-L-methionine biosynthesis; S-adenosyl-L-methionine from L-methionine: step 1/1. Catalyzes the formation of S-adenosylmethionine (AdoMet) from methionine and ATP. The overall synthetic reaction is composed of two sequential steps, AdoMet formation and the subsequent tripolyphosphate hydrolysis which occurs prior to release of AdoMet from the enzyme. This chain is S-adenosylmethionine synthase, found in Staphylococcus haemolyticus (strain JCSC1435).